We begin with the raw amino-acid sequence, 570 residues long: Urease subunit alpha 1 (570 aa).

In terms of domain architecture, Urease spans 131-570 (GGIDTHVHFI…VPMAQRYFLF (440 aa)). 3 residues coordinate Ni(2+): H136, H138, and K219. An N6-carboxylysine modification is found at K219. A substrate-binding site is contributed by H221. H248 and H274 together coordinate Ni(2+). The Proton donor role is filled by H322. D362 contributes to the Ni(2+) binding site.

Belongs to the metallo-dependent hydrolases superfamily. Urease alpha subunit family. As to quaternary structure, heterotrimer of UreA (gamma), UreB (beta) and UreC (alpha) subunits. Three heterotrimers associate to form the active enzyme. Ni cation serves as cofactor. In terms of processing, carboxylation allows a single lysine to coordinate two nickel ions.

It localises to the cytoplasm. It catalyses the reaction urea + 2 H2O + H(+) = hydrogencarbonate + 2 NH4(+). It functions in the pathway nitrogen metabolism; urea degradation; CO(2) and NH(3) from urea (urease route): step 1/1. The protein is Urease subunit alpha 1 of Brucella melitensis biotype 1 (strain ATCC 23456 / CCUG 17765 / NCTC 10094 / 16M).